Reading from the N-terminus, the 120-residue chain is Putative B3 domain-containing protein At3g28853 (120 aa).

The segment at residues 19–120 (INKRLTQSDV…DKSNEVFYII (102 aa)) is a DNA-binding region (TF-B3).

The protein localises to the nucleus. This Arabidopsis thaliana (Mouse-ear cress) protein is Putative B3 domain-containing protein At3g28853.